The chain runs to 332 residues: Cytoskeleton protein RodZ (332 aa).

The Cytoplasmic segment spans residues 1 to 111 (MNTETTQDTT…LKKSRKKRDG (111 aa)). An HTH cro/C1-type domain is found at 19–71 (LREARERLGLTQQTIAERLCLKITTVRDIEDGTTPADLAPTFLRGYIRSYAKL). Positions 30–49 (QQTIAERLCLKITTVRDIED) form a DNA-binding region, H-T-H motif. The helical; Signal-anchor for type II membrane protein transmembrane segment at 112 to 132 (WLMIITWLVVLVVLGLTGAWW) threads the bilayer. At 133–332 (WQNHQAQQAE…QVARLTLTAE (200 aa)) the chain is on the periplasmic side. A disordered region spans residues 149-225 (HASSMQSQTE…PSQANATQSQ (77 aa)). Polar residues-rich tracts occupy residues 151 to 160 (SSMQSQTEGQ) and 168 to 182 (SAPQ…AATP). Positions 190–225 (SATIAATPSTPPSSTTASSAAPSSQSPSQANATQSQ) are enriched in low complexity.

Belongs to the RodZ family.

Its subcellular location is the cell inner membrane. Its function is as follows. Cytoskeletal protein that is involved in cell-shape control through regulation of the length of the long axis. The protein is Cytoskeleton protein RodZ of Pectobacterium atrosepticum (strain SCRI 1043 / ATCC BAA-672) (Erwinia carotovora subsp. atroseptica).